Here is a 300-residue protein sequence, read N- to C-terminus: Acetylglutamate kinase (300 aa).

Substrate is bound by residues 69–70, Arg91, and Asn197; that span reads GG.

Belongs to the acetylglutamate kinase family. ArgB subfamily.

Its subcellular location is the cytoplasm. It carries out the reaction N-acetyl-L-glutamate + ATP = N-acetyl-L-glutamyl 5-phosphate + ADP. Its pathway is amino-acid biosynthesis; L-arginine biosynthesis; N(2)-acetyl-L-ornithine from L-glutamate: step 2/4. Catalyzes the ATP-dependent phosphorylation of N-acetyl-L-glutamate. In Kineococcus radiotolerans (strain ATCC BAA-149 / DSM 14245 / SRS30216), this protein is Acetylglutamate kinase.